A 265-amino-acid polypeptide reads, in one-letter code: Homeobox protein engrailed-2-B (265 aa).

2 stretches are compositionally biased toward basic and acidic residues: residues methionine 1–glutamate 12 and glycine 102–lysine 115. Disordered stretches follow at residues methionine 1 to histidine 38, isoleucine 60 to alanine 138, and aspartate 156 to alanine 182. The segment covering aspartate 122 to serine 136 has biased composition (low complexity). Positions aspartate 176–threonine 235 form a DNA-binding region, homeobox.

Belongs to the engrailed homeobox family.

The protein localises to the nucleus. This Xenopus laevis (African clawed frog) protein is Homeobox protein engrailed-2-B (en2-b).